The chain runs to 300 residues: Protoheme IX farnesyltransferase (300 aa).

9 consecutive transmembrane segments (helical) span residues 24–44 (VTQLAVFCAVIGMFLATPGMV), 48–68 (VLIGGTVGIWLLAGAAFAINC), 94–114 (PQILLFSAVLGSIGAWTLYTF), 118–138 (LTMWLTIATFVGYAVIYTLLL), 146–166 (IVIGGASGAMPPALGWAAVTG), 172–192 (AWILVLIIFVWTPPHFWVLAL), 217–237 (LHILLYTVILFAVTLMPFISG), 239–259 (SGAVYLTSAVLLGAVFLAYAW), and 278–298 (IVYLSLLFAALLVDHYARPLL).

The protein belongs to the UbiA prenyltransferase family. Protoheme IX farnesyltransferase subfamily.

The protein resides in the cell inner membrane. It catalyses the reaction heme b + (2E,6E)-farnesyl diphosphate + H2O = Fe(II)-heme o + diphosphate. It participates in porphyrin-containing compound metabolism; heme O biosynthesis; heme O from protoheme: step 1/1. Functionally, converts heme B (protoheme IX) to heme O by substitution of the vinyl group on carbon 2 of heme B porphyrin ring with a hydroxyethyl farnesyl side group. The polypeptide is Protoheme IX farnesyltransferase (Burkholderia vietnamiensis (strain G4 / LMG 22486) (Burkholderia cepacia (strain R1808))).